We begin with the raw amino-acid sequence, 222 residues long: Acyl-protein thioesterase 1 homolog 2 (222 aa).

Residues Ser116, Asp169, and His202 each act as charge relay system in the active site.

This sequence belongs to the AB hydrolase superfamily. AB hydrolase 2 family.

The protein resides in the cytoplasm. Its subcellular location is the nucleus. It carries out the reaction S-hexadecanoyl-L-cysteinyl-[protein] + H2O = L-cysteinyl-[protein] + hexadecanoate + H(+). Hydrolyzes fatty acids from S-acylated cysteine residues in proteins with a strong preference for palmitoylated G-alpha proteins over other acyl substrates. Mediates the deacylation of G-alpha proteins such as GPA1 in vivo, but has weak or no activity toward palmitoylated Ras proteins. Has weak lysophospholipase activity in vitro; however such activity may not exist in vivo. This is Acyl-protein thioesterase 1 homolog 2 from Dictyostelium discoideum (Social amoeba).